Here is a 699-residue protein sequence, read N- to C-terminus: Chitinase A1 (699 aa).

A signal peptide spans 1 to 41 (MINLNKHTAFKKTAKFFLGLSLLLSVIVPSFALQPATAEAA). The GH18 domain maps to 44–454 (YKIVGYYPSW…NKLKADLPTG (411 aa)). Residues 135–136 (DQ) and 162–165 (GGWT) each bind chitin. The Proton donor role is filled by E204. Chitin contacts are provided by residues Y205, 277–280 (MTYD), and W433. Residues 449–471 (ADLPTGGTVPPVDTTAPSVPGNA) are disordered. A compositionally biased stretch (low complexity) spans 452-465 (PTGGTVPPVDTTAP). Fibronectin type-III domains follow at residues 467-553 (VPGN…TAQP) and 562-647 (APTN…TAAE).

The protein belongs to the glycosyl hydrolase 18 family. Chitinase class II subfamily.

It carries out the reaction Random endo-hydrolysis of N-acetyl-beta-D-glucosaminide (1-&gt;4)-beta-linkages in chitin and chitodextrins.. This chain is Chitinase A1 (chiA1), found in Niallia circulans (Bacillus circulans).